A 306-amino-acid polypeptide reads, in one-letter code: MIMVQGEVSGKKYTEPFSKGVLARSLTRAEMDPNRAYTFASRIEAHLKKNKVDLITIEELVEIVSEHLRKEDPEVAEKYMLWRKIRQCKEPLIILIGGASGVGTSSIAFEVANRLGIRNMISTDMIREVMRKIVSRELLPSIYESSYTAYQSLRIPPPPELDEVLIGFRDHVESVSIGVEAVIERALTEGISIVIEGVHIVPGFIREDLVNKENVAMFVLTVSDENVHKGRFYSRCRQMWARRPLKRYISYFWAIRRIHRYIENQARKHGVPVIENIDVVTTIDSIIKSLTKTTVKGGEKGAEKTE.

An ATP-cone domain is found at Met1–Glu90.

This sequence belongs to the 2-phosphoglycerate kinase family. A divalent metal cation serves as cofactor.

The catalysed reaction is (2R)-2-phosphoglycerate + ATP = (2R)-2,3-bisphosphoglycerate + ADP + H(+). It functions in the pathway thermoadapter biosynthesis; cyclic 2,3-diphosphoglycerate biosynthesis; cyclic 2,3-diphosphoglycerate from 2-phospho-D-glycerate: step 1/2. In terms of biological role, catalyzes the phosphorylation of 2-phosphoglycerate to 2,3-diphosphoglycerate. Involved in the biosynthesis of cyclic 2,3-bisphosphoglycerate, a thermoprotectant. The chain is 2-phosphoglycerate kinase from Methanothermobacter thermautotrophicus (strain ATCC 29096 / DSM 1053 / JCM 10044 / NBRC 100330 / Delta H) (Methanobacterium thermoautotrophicum).